A 153-amino-acid polypeptide reads, in one-letter code: MTETSEAVEIAVGTPAAKHSESFVFERSIQTVGRRKEAVVRVRLVLGTGKFDLNGRSLEDYFPNKVHQQLIKAPLVTVERTRNFDIFALLHGGGPSGQAGALRLGIARALILASPEDRPALKKAGFLTRDPRSTERKKYGLKKARKAPQYSKR.

The tract at residues 122–153 is disordered; that stretch reads KKAGFLTRDPRSTERKKYGLKKARKAPQYSKR. The segment covering 129 to 138 has biased composition (basic and acidic residues); that stretch reads RDPRSTERKK. Positions 139 to 153 are enriched in basic residues; sequence YGLKKARKAPQYSKR.

It belongs to the universal ribosomal protein uS9 family.

This is Small ribosomal subunit protein uS9 (rpsI) from Mycobacterium leprae (strain TN).